The primary structure comprises 57 residues: Sec-independent protein translocase protein TatA (57 aa).

Residues 1-21 (MGISVWQLLIILLIVVMLFGT) traverse the membrane as a helical segment. The tract at residues 37–57 (GFRKSVSDGETTTQAEASSRS) is disordered. Residues 44-57 (DGETTTQAEASSRS) are compositionally biased toward polar residues.

It belongs to the TatA/E family. As to quaternary structure, the Tat system comprises two distinct complexes: a TatABC complex, containing multiple copies of TatA, TatB and TatC subunits, and a separate TatA complex, containing only TatA subunits. Substrates initially bind to the TatABC complex, which probably triggers association of the separate TatA complex to form the active translocon.

It is found in the cell inner membrane. In terms of biological role, part of the twin-arginine translocation (Tat) system that transports large folded proteins containing a characteristic twin-arginine motif in their signal peptide across membranes. TatA could form the protein-conducting channel of the Tat system. This is Sec-independent protein translocase protein TatA from Stutzerimonas stutzeri (Pseudomonas stutzeri).